Reading from the N-terminus, the 276-residue chain is Putative olfactory receptor 10J6 (276 aa).

The Extracellular segment spans residues M1–I25. The N-linked (GlcNAc...) asparagine glycan is linked to N5. The chain crosses the membrane as a helical span at residues T26–M46. Residues T47–H54 lie on the Cytoplasmic side of the membrane. Residues L55–L75 traverse the membrane as a helical segment. At F76–T99 the chain is on the extracellular side. C97 and C188 are joined by a disulfide. A helical transmembrane segment spans residues Q100–Y120. The Cytoplasmic segment spans residues D121 to K139. Residues V140 to V160 form a helical membrane-spanning segment. Over T161–I196 the chain is Extracellular. N190 carries an N-linked (GlcNAc...) asparagine glycan. The chain crosses the membrane as a helical span at residues I197–S216. Over Y217 to T236 the chain is Cytoplasmic. The helical transmembrane segment at F237–A257 threads the bilayer. The Extracellular segment spans residues Y258–D270. A helical membrane pass occupies residues L271–T276.

The protein belongs to the G-protein coupled receptor 1 family.

It localises to the cell membrane. Functionally, odorant receptor. The polypeptide is Putative olfactory receptor 10J6 (OR10J6P) (Homo sapiens (Human)).